We begin with the raw amino-acid sequence, 165 residues long: Crossover junction endodeoxyribonuclease RuvC (165 aa).

Active-site residues include Asp7, Glu67, and Asp140. Residues Asp7, Glu67, and Asp140 each coordinate Mg(2+).

The protein belongs to the RuvC family. As to quaternary structure, homodimer which binds Holliday junction (HJ) DNA. The HJ becomes 2-fold symmetrical on binding to RuvC with unstacked arms; it has a different conformation from HJ DNA in complex with RuvA. In the full resolvosome a probable DNA-RuvA(4)-RuvB(12)-RuvC(2) complex forms which resolves the HJ. It depends on Mg(2+) as a cofactor.

The protein localises to the cytoplasm. It carries out the reaction Endonucleolytic cleavage at a junction such as a reciprocal single-stranded crossover between two homologous DNA duplexes (Holliday junction).. Its function is as follows. The RuvA-RuvB-RuvC complex processes Holliday junction (HJ) DNA during genetic recombination and DNA repair. Endonuclease that resolves HJ intermediates. Cleaves cruciform DNA by making single-stranded nicks across the HJ at symmetrical positions within the homologous arms, yielding a 5'-phosphate and a 3'-hydroxyl group; requires a central core of homology in the junction. The consensus cleavage sequence is 5'-(A/T)TT(C/G)-3'. Cleavage occurs on the 3'-side of the TT dinucleotide at the point of strand exchange. HJ branch migration catalyzed by RuvA-RuvB allows RuvC to scan DNA until it finds its consensus sequence, where it cleaves and resolves the cruciform DNA. The chain is Crossover junction endodeoxyribonuclease RuvC from Thermotoga petrophila (strain ATCC BAA-488 / DSM 13995 / JCM 10881 / RKU-1).